The primary structure comprises 498 residues: Glutamate--tRNA ligase (498 aa).

The 'HIGH' region signature appears at 11-21; that stretch reads PSPTGHLHIGN. A 'KMSKS' region motif is present at residues 261–265; sequence KLSKR. Lys-264 contributes to the ATP binding site.

The protein belongs to the class-I aminoacyl-tRNA synthetase family. Glutamate--tRNA ligase type 1 subfamily. In terms of assembly, monomer.

The protein localises to the cytoplasm. It carries out the reaction tRNA(Glu) + L-glutamate + ATP = L-glutamyl-tRNA(Glu) + AMP + diphosphate. Its function is as follows. Catalyzes the attachment of glutamate to tRNA(Glu) in a two-step reaction: glutamate is first activated by ATP to form Glu-AMP and then transferred to the acceptor end of tRNA(Glu). The sequence is that of Glutamate--tRNA ligase from Oenococcus oeni (strain ATCC BAA-331 / PSU-1).